A 360-amino-acid polypeptide reads, in one-letter code: tRNA (guanine(37)-N(1))-methyltransferase (360 aa).

S-adenosyl-L-methionine is bound by residues Arg-197, 235-236 (DL), and Asn-283.

This sequence belongs to the class I-like SAM-binding methyltransferase superfamily. TRM5/TYW2 family. As to quaternary structure, monomer.

Its subcellular location is the mitochondrion matrix. The protein resides in the nucleus. The protein localises to the cytoplasm. It catalyses the reaction guanosine(37) in tRNA + S-adenosyl-L-methionine = N(1)-methylguanosine(37) in tRNA + S-adenosyl-L-homocysteine + H(+). Specifically methylates the N1 position of guanosine-37 in various cytoplasmic and mitochondrial tRNAs. Methylation is not dependent on the nature of the nucleoside 5' of the target nucleoside. This is the first step in the biosynthesis of wybutosine (yW), a modified base adjacent to the anticodon of tRNAs and required for accurate decoding. The polypeptide is tRNA (guanine(37)-N(1))-methyltransferase (Encephalitozoon cuniculi (strain GB-M1) (Microsporidian parasite)).